The primary structure comprises 178 residues: ATP-dependent protease subunit HslV (178 aa).

The active site involves Thr7. The Na(+) site is built by Gly162, Cys165, and Thr168.

It belongs to the peptidase T1B family. HslV subfamily. In terms of assembly, a double ring-shaped homohexamer of HslV is capped on each side by a ring-shaped HslU homohexamer. The assembly of the HslU/HslV complex is dependent on binding of ATP.

It localises to the cytoplasm. It carries out the reaction ATP-dependent cleavage of peptide bonds with broad specificity.. Allosterically activated by HslU binding. Protease subunit of a proteasome-like degradation complex believed to be a general protein degrading machinery. This Paraburkholderia phymatum (strain DSM 17167 / CIP 108236 / LMG 21445 / STM815) (Burkholderia phymatum) protein is ATP-dependent protease subunit HslV.